The sequence spans 352 residues: Ion-translocating oxidoreductase complex subunit D (352 aa).

Helical transmembrane passes span 20–40 (IMLL…WFFG), 42–62 (GTLF…AIVL), 69–91 (VASH…SIPP), and 123–143 (PAMI…TSWL). Threonine 187 carries the FMN phosphoryl threonine modification. Transmembrane regions (helical) follow at residues 215–235 (LAGV…VFLL), 242–262 (WHIP…GWLF), 267–287 (LASP…FFIL), 301–321 (LIFG…GGYP), and 322–342 (DGVA…DYYT).

It belongs to the NqrB/RnfD family. As to quaternary structure, the complex is composed of six subunits: RsxA, RsxB, RsxC, RsxD, RsxE and RsxG. The cofactor is FMN.

It localises to the cell inner membrane. Functionally, part of a membrane-bound complex that couples electron transfer with translocation of ions across the membrane. Required to maintain the reduced state of SoxR. This Salmonella paratyphi B (strain ATCC BAA-1250 / SPB7) protein is Ion-translocating oxidoreductase complex subunit D.